Consider the following 117-residue polypeptide: Large ribosomal subunit protein bL20 (117 aa).

This sequence belongs to the bacterial ribosomal protein bL20 family.

Its function is as follows. Binds directly to 23S ribosomal RNA and is necessary for the in vitro assembly process of the 50S ribosomal subunit. It is not involved in the protein synthesizing functions of that subunit. The protein is Large ribosomal subunit protein bL20 of Roseiflexus sp. (strain RS-1).